Here is a 111-residue protein sequence, read N- to C-terminus: Auxin-repressed 12.5 kDa protein (111 aa).

Positions 18 to 111 (ERGLGMLRKV…SGETRSKHHR (94 aa)) are disordered. Positions 43-57 (TMPTTPTTPVTPTTP) are enriched in low complexity. The segment covering 74–95 (SNLSSKTMGNQVFDSPQPNSPT) has biased composition (polar residues).

The protein belongs to the DRM1/ARP family.

This is Auxin-repressed 12.5 kDa protein from Fragaria ananassa (Strawberry).